The following is a 120-amino-acid chain: Large ribosomal subunit protein uL24 (120 aa).

The interval 1 to 26 (MSKQPDKQRKSQRRAPLHERHKQVRA) is disordered. A compositionally biased stretch (basic residues) spans 10–24 (KSQRRAPLHERHKQV).

The protein belongs to the universal ribosomal protein uL24 family. As to quaternary structure, part of the 50S ribosomal subunit. Interacts weakly with protein L4.

Its function is as follows. One of two assembly initiator proteins, it binds directly to the 5'-end of the 23S rRNA, where it nucleates assembly of the 50S subunit. Stabilizes the tertiary rRNA structure within the 23S rRNA domain (domain I) to which it binds. Located at the polypeptide exit tunnel on the outside of the subunit. This Haloarcula marismortui (strain ATCC 43049 / DSM 3752 / JCM 8966 / VKM B-1809) (Halobacterium marismortui) protein is Large ribosomal subunit protein uL24 (rpl24).